A 270-amino-acid chain; its full sequence is 26S proteasome regulatory subunit rpn12 (270 aa).

In terms of domain architecture, PCI spans Cys-65–Asp-237.

The protein belongs to the proteasome subunit S14 family.

In terms of biological role, acts as a regulatory subunit of the 26S proteasome which is involved in the ATP-dependent degradation of ubiquitinated proteins. The chain is 26S proteasome regulatory subunit rpn12 (rpn12) from Schizosaccharomyces pombe (strain 972 / ATCC 24843) (Fission yeast).